The following is a 299-amino-acid chain: uncharacterized protein (299 aa).

This sequence belongs to the glycosyltransferase 2 family.

This is an uncharacterized protein from Mycoplasma pneumoniae (strain ATCC 29342 / M129 / Subtype 1) (Mycoplasmoides pneumoniae).